Here is a 1123-residue protein sequence, read N- to C-terminus: Telomerase reverse transcriptase (1123 aa).

Disordered stretches follow at residues 191 to 242 and 410 to 439; these read ENKR…KTTK and GTTSQSSRRQKADKLPHGSSSSQTGKPKCP. A compositionally biased stretch (polar residues) spans 201–210; that stretch reads QPPTKRQWLS. One can recognise a Reverse transcriptase domain in the interval 596–929; sequence LVDDAEAESS…PFVRWTGLLI (334 aa). Mg(2+) is bound by residues Asp691, Asp860, and Asp861.

It belongs to the reverse transcriptase family. Telomerase subfamily. As to quaternary structure, component of the telomerase ribonucleoprotein complex. Interacts with POT1A.

Its subcellular location is the nucleus. The protein localises to the chromosome. It localises to the telomere. It catalyses the reaction DNA(n) + a 2'-deoxyribonucleoside 5'-triphosphate = DNA(n+1) + diphosphate. Telomerase is a ribonucleoprotein enzyme essential for the replication of chromosome termini in most eukaryotes. It elongates telomeres. It is a reverse transcriptase that adds simple sequence repeats to chromosome ends by copying a template sequence within the RNA component of the enzyme. Required to prevent genome instability induced by breakage-fusion-bridge (BFB) cycles. Can extend completely non-telomeric sequences using RNA template in vitro. This chain is Telomerase reverse transcriptase (TERT), found in Arabidopsis thaliana (Mouse-ear cress).